Reading from the N-terminus, the 303-residue chain is UDP-N-acetylenolpyruvoylglucosamine reductase (303 aa).

Residues 27 to 217 form the FAD-binding PCMH-type domain; it reads KVGGISQVFY…QTVRKLTQPI (191 aa). R175 is a catalytic residue. Catalysis depends on S224, which acts as the Proton donor. E294 is an active-site residue.

Belongs to the MurB family. It depends on FAD as a cofactor.

It is found in the cytoplasm. The enzyme catalyses UDP-N-acetyl-alpha-D-muramate + NADP(+) = UDP-N-acetyl-3-O-(1-carboxyvinyl)-alpha-D-glucosamine + NADPH + H(+). It functions in the pathway cell wall biogenesis; peptidoglycan biosynthesis. Cell wall formation. This Orientia tsutsugamushi (strain Ikeda) (Rickettsia tsutsugamushi) protein is UDP-N-acetylenolpyruvoylglucosamine reductase.